Consider the following 265-residue polypeptide: RING finger protein 208 (265 aa).

The tract at residues 83–106 is disordered; that stretch reads MPTLEGASHTPPLPRRPRKGSSEL. Phosphoserine is present on Ser103. Residues 147–194 form an RING-type zinc finger; it reads CPTCGHTYNVTQRRPRVLSCLHSVCEQCLQILYESCPKYKFISCPTCH.

The sequence is that of RING finger protein 208 (Rnf208) from Mus musculus (Mouse).